A 561-amino-acid chain; its full sequence is Urocanate hydratase (561 aa).

NAD(+)-binding positions include 52 to 53 (GG), glutamine 130, 176 to 178 (GMG), glutamate 196, arginine 201, 242 to 243 (NA), 267 to 271 (QTSAH), 277 to 278 (YL), and tyrosine 326. Residue cysteine 414 is part of the active site. An NAD(+)-binding site is contributed by glycine 496.

It belongs to the urocanase family. NAD(+) is required as a cofactor.

The protein localises to the cytoplasm. The enzyme catalyses 4-imidazolone-5-propanoate = trans-urocanate + H2O. The protein operates within amino-acid degradation; L-histidine degradation into L-glutamate; N-formimidoyl-L-glutamate from L-histidine: step 2/3. Functionally, catalyzes the conversion of urocanate to 4-imidazolone-5-propionate. The chain is Urocanate hydratase from Rhizobium rhizogenes (strain K84 / ATCC BAA-868) (Agrobacterium radiobacter).